The following is a 399-amino-acid chain: Succinate--CoA ligase [ADP-forming] subunit beta (399 aa).

One can recognise an ATP-grasp domain in the interval 9–254; it reads KAVLQPFGVS…ETEEDAKEIE (246 aa). ATP contacts are provided by residues Lys46, 53-55, Glu109, Ser112, and Glu117; that span reads GRG. Mg(2+)-binding residues include Asn209 and Asp223. Substrate is bound by residues Asn274 and 331 to 333; that span reads GIM.

The protein belongs to the succinate/malate CoA ligase beta subunit family. In terms of assembly, heterotetramer of two alpha and two beta subunits. It depends on Mg(2+) as a cofactor.

The enzyme catalyses succinate + ATP + CoA = succinyl-CoA + ADP + phosphate. It catalyses the reaction GTP + succinate + CoA = succinyl-CoA + GDP + phosphate. The protein operates within carbohydrate metabolism; tricarboxylic acid cycle; succinate from succinyl-CoA (ligase route): step 1/1. Succinyl-CoA synthetase functions in the citric acid cycle (TCA), coupling the hydrolysis of succinyl-CoA to the synthesis of either ATP or GTP and thus represents the only step of substrate-level phosphorylation in the TCA. The beta subunit provides nucleotide specificity of the enzyme and binds the substrate succinate, while the binding sites for coenzyme A and phosphate are found in the alpha subunit. The chain is Succinate--CoA ligase [ADP-forming] subunit beta from Rhodopseudomonas palustris (strain BisB18).